Consider the following 96-residue polypeptide: uncharacterized protein (96 aa).

This is an uncharacterized protein from Sulfolobus islandicus filamentous virus (isolate Iceland/Hveragerdi) (SIFV).